Reading from the N-terminus, the 214-residue chain is Thiamine-phosphate synthase (214 aa).

4-amino-2-methyl-5-(diphosphooxymethyl)pyrimidine-binding positions include 38 to 42 (QLREK) and asparagine 70. The Mg(2+) site is built by aspartate 71 and aspartate 90. Positions 109 and 138 each coordinate 4-amino-2-methyl-5-(diphosphooxymethyl)pyrimidine. Residue glycine 165 coordinates 2-[(2R,5Z)-2-carboxy-4-methylthiazol-5(2H)-ylidene]ethyl phosphate.

Belongs to the thiamine-phosphate synthase family. Mg(2+) serves as cofactor.

It catalyses the reaction 2-[(2R,5Z)-2-carboxy-4-methylthiazol-5(2H)-ylidene]ethyl phosphate + 4-amino-2-methyl-5-(diphosphooxymethyl)pyrimidine + 2 H(+) = thiamine phosphate + CO2 + diphosphate. The catalysed reaction is 2-(2-carboxy-4-methylthiazol-5-yl)ethyl phosphate + 4-amino-2-methyl-5-(diphosphooxymethyl)pyrimidine + 2 H(+) = thiamine phosphate + CO2 + diphosphate. It carries out the reaction 4-methyl-5-(2-phosphooxyethyl)-thiazole + 4-amino-2-methyl-5-(diphosphooxymethyl)pyrimidine + H(+) = thiamine phosphate + diphosphate. It participates in cofactor biosynthesis; thiamine diphosphate biosynthesis; thiamine phosphate from 4-amino-2-methyl-5-diphosphomethylpyrimidine and 4-methyl-5-(2-phosphoethyl)-thiazole: step 1/1. Functionally, condenses 4-methyl-5-(beta-hydroxyethyl)thiazole monophosphate (THZ-P) and 2-methyl-4-amino-5-hydroxymethyl pyrimidine pyrophosphate (HMP-PP) to form thiamine monophosphate (TMP). The polypeptide is Thiamine-phosphate synthase (Caldanaerobacter subterraneus subsp. tengcongensis (strain DSM 15242 / JCM 11007 / NBRC 100824 / MB4) (Thermoanaerobacter tengcongensis)).